Reading from the N-terminus, the 1481-residue chain is Neuropathy target esterase sws (1481 aa).

Topologically, residues Met-1 to Ser-34 are lumenal. The chain crosses the membrane as a helical span at residues Leu-35–Phe-55. Residues Lys-56–Asn-1481 are Cytoplasmic-facing. Ile-175–Arg-302 contributes to the a nucleoside 3',5'-cyclic phosphate binding site. The segment at His-336–Gly-420 is disordered. 2 stretches are compositionally biased toward low complexity: residues Ser-339–Gln-379 and Ser-401–Asn-412. Ser-448 carries the post-translational modification Phosphoserine. Residues Glu-492–Arg-624 and Ile-613–Arg-740 contribute to the a nucleoside 3',5'-cyclic phosphate site. The region spanning Leu-967–Arg-1133 is the PNPLA domain. Residues Gly-971–Gly-976 carry the GXGXXG motif. The GXSXG motif lies at Gly-998–Gly-1002. Ser-1000 (nucleophile) is an active-site residue. Asp-1120 (proton acceptor) is an active-site residue. The DGA/G motif lies at Asp-1120 to Gly-1122. Position 1214 is a phosphoserine (Ser-1214). A disordered region spans residues Leu-1366 to Asn-1481. 2 stretches are compositionally biased toward basic and acidic residues: residues Ile-1379 to Ala-1390 and Lys-1400 to Asp-1410. Residues Thr-1445–Thr-1457 show a composition bias toward low complexity.

The protein belongs to the NTE family. In terms of assembly, interacts with Pka-C3; interaction inhibits the catalytic function of Pka-C3 and the esterase activity of sws.

It localises to the endoplasmic reticulum membrane. It catalyses the reaction a 1-acyl-sn-glycero-3-phosphocholine + H2O = sn-glycerol 3-phosphocholine + a fatty acid + H(+). Its function is as follows. Phospholipase B that deacylates intracellular phosphatidylcholine (PtdCho), generating glycerophosphocholine (GroPtdCho). This deacylation occurs at both sn-2 and sn-1 positions of PtdCho. Its specific chemical modification by certain organophosphorus (OP) compounds leads to distal axonopathy. Plays a role in the signaling mechanism between neurons and glia that regulates glia wrapping during development of the adult brain. Essential for membrane lipid homeostasis and cell survival in both neurons and glia of the adult brain. The protein is Neuropathy target esterase sws of Drosophila willistoni (Fruit fly).